Here is a 523-residue protein sequence, read N- to C-terminus: 2-isopropylmalate synthase (523 aa).

Residues 5–267 (VIIFDTTLRD…HTNINHHEIW (263 aa)) enclose the Pyruvate carboxyltransferase domain. The Mn(2+) site is built by aspartate 14, histidine 202, histidine 204, and asparagine 238. Positions 392–523 (RLDYFSVQSG…QNKENNKETV (132 aa)) are regulatory domain.

The protein belongs to the alpha-IPM synthase/homocitrate synthase family. LeuA type 1 subfamily. In terms of assembly, homodimer. Mn(2+) serves as cofactor.

It localises to the cytoplasm. The catalysed reaction is 3-methyl-2-oxobutanoate + acetyl-CoA + H2O = (2S)-2-isopropylmalate + CoA + H(+). Its pathway is amino-acid biosynthesis; L-leucine biosynthesis; L-leucine from 3-methyl-2-oxobutanoate: step 1/4. In terms of biological role, catalyzes the condensation of the acetyl group of acetyl-CoA with 3-methyl-2-oxobutanoate (2-ketoisovalerate) to form 3-carboxy-3-hydroxy-4-methylpentanoate (2-isopropylmalate). This Salmonella dublin (strain CT_02021853) protein is 2-isopropylmalate synthase.